Reading from the N-terminus, the 549-residue chain is Protein EPD1 (549 aa).

The N-terminal stretch at 1 to 22 (MLLNSLFPSILAAATFVTSAAA) is a signal peptide. N-linked (GlcNAc...) asparagine glycans are attached at residues asparagine 40 and asparagine 59. Cysteine 72 and cysteine 101 are oxidised to a cystine. Asparagine 147 and asparagine 163 each carry an N-linked (GlcNAc...) asparagine glycan. Intrachain disulfides connect cysteine 214–cysteine 347, cysteine 232–cysteine 263, cysteine 369–cysteine 420, cysteine 378–cysteine 444, and cysteine 397–cysteine 402. A compositionally biased stretch (polar residues) spans 336 to 356 (AESASGVSRTSCPTNTDNWEA). The disordered stretch occupies residues 336–361 (AESASGVSRTSCPTNTDNWEASTELP). N-linked (GlcNAc...) asparagine glycosylation occurs at asparagine 383. N-linked (GlcNAc...) asparagine glycans are attached at residues asparagine 408 and asparagine 438. The tract at residues 479–519 (SVRTDTSEATTDSGSGSSNSGSASSSKSTSSSTSSGSSGSK) is disordered. Low complexity predominate over residues 487–519 (ATTDSGSGSSNSGSASSSKSTSSSTSSGSSGSK).

This sequence belongs to the glycosyl hydrolase 72 family.

Its subcellular location is the cell membrane. The sequence is that of Protein EPD1 (EPD1) from Candida maltosa (Yeast).